The sequence spans 108 residues: Nucleoid-associated protein Pmen_2646 (108 aa).

A disordered region spans residues 1–25 (MMKGGMAGLMKQAQQMQEKMQKMQE).

It belongs to the YbaB/EbfC family. Homodimer.

The protein resides in the cytoplasm. Its subcellular location is the nucleoid. In terms of biological role, binds to DNA and alters its conformation. May be involved in regulation of gene expression, nucleoid organization and DNA protection. The polypeptide is Nucleoid-associated protein Pmen_2646 (Ectopseudomonas mendocina (strain ymp) (Pseudomonas mendocina)).